Here is a 229-residue protein sequence, read N- to C-terminus: Urease accessory protein UreF (229 aa).

The protein belongs to the UreF family. UreD, UreF and UreG form a complex that acts as a GTP-hydrolysis-dependent molecular chaperone, activating the urease apoprotein by helping to assemble the nickel containing metallocenter of UreC. The UreE protein probably delivers the nickel.

It is found in the cytoplasm. In terms of biological role, required for maturation of urease via the functional incorporation of the urease nickel metallocenter. The chain is Urease accessory protein UreF from Staphylococcus epidermidis (strain ATCC 35984 / DSM 28319 / BCRC 17069 / CCUG 31568 / BM 3577 / RP62A).